The primary structure comprises 136 residues: Piercer of microtubule wall 1 protein (136 aa).

The segment covering 1-16 (MSEEDPKACAEPEEPK) has biased composition (basic and acidic residues). The tract at residues 1-27 (MSEEDPKACAEPEEPKAGPPPEKTSDW) is disordered.

The protein belongs to the PIERCE1 family. Microtubule inner protein component of sperm flagellar doublet microtubules. Interacts with CFAP53, ODAD1 and ODAD3; the interactions link the outer dynein arms docking complex (ODA-DC) to the internal microtubule inner proteins (MIP) in cilium axoneme. In terms of tissue distribution, expressed in trachea multiciliated cells.

It is found in the cytoplasm. Its subcellular location is the cytoskeleton. The protein localises to the cilium axoneme. It localises to the flagellum axoneme. Functionally, microtubule inner protein involved in the attachment of outer dynein arms (ODAs) to dynein-decorated doublet microtubules (DMTs) in cilia axoneme, which is required for motile cilia beating. Functions at the initial step of left-right asymmetry specification of the visceral organs. This is Piercer of microtubule wall 1 protein (PIERCE1) from Bos taurus (Bovine).